We begin with the raw amino-acid sequence, 118 residues long: Large ribosomal subunit protein bL20 (118 aa).

This sequence belongs to the bacterial ribosomal protein bL20 family.

Its function is as follows. Binds directly to 23S ribosomal RNA and is necessary for the in vitro assembly process of the 50S ribosomal subunit. It is not involved in the protein synthesizing functions of that subunit. This chain is Large ribosomal subunit protein bL20, found in Yersinia enterocolitica serotype O:8 / biotype 1B (strain NCTC 13174 / 8081).